The following is a 722-amino-acid chain: Zinc finger protein 600 (722 aa).

The C2H2-type 1; degenerate zinc finger occupies 162 to 184; it reads FQCNESGKAFNCSSLLRKHQIPH. 9 consecutive C2H2-type zinc fingers follow at residues 190–212, 218–240, 246–268, 274–296, 302–324, 330–352, 358–380, 386–408, and 414–436; these read YKCD…CRCH, YKCN…RRLH, HKCN…KAIH, YKCN…RRIH, YKCE…KRIH, YKCK…KRIH, YKCN…HRLH, YKCK…TRIH, and YKCN…KSIH. A C2H2-type 11; degenerate zinc finger spans residues 442-464; that stretch reads YKYEECEKVFSCGSTLETHKIIH. C2H2-type zinc fingers lie at residues 470–492, 498–520, 526–548, 554–576, 582–604, 610–632, 638–660, 666–688, and 694–716; these read YKCK…TRIH, YKCN…RRVH, YKCN…RRLH, YKCT…TRIH, YKCN…HRIH, YKCE…RRIH, YKCK…TGLH, and YKCN…QAVH.

This sequence belongs to the krueppel C2H2-type zinc-finger protein family.

The protein localises to the nucleus. Its function is as follows. May be involved in transcriptional regulation. In Homo sapiens (Human), this protein is Zinc finger protein 600 (ZNF600).